The primary structure comprises 381 residues: Protein RecA (381 aa).

79–86 provides a ligand contact to ATP; the sequence is GPESSGKT.

Belongs to the RecA family.

It localises to the cytoplasm. Its function is as follows. Can catalyze the hydrolysis of ATP in the presence of single-stranded DNA, the ATP-dependent uptake of single-stranded DNA by duplex DNA, and the ATP-dependent hybridization of homologous single-stranded DNAs. It interacts with LexA causing its activation and leading to its autocatalytic cleavage. The chain is Protein RecA from Streptococcus parasanguinis.